The chain runs to 416 residues: Homeobox protein ceh-62 (416 aa).

A compositionally biased stretch (low complexity) spans 103–113 (TPTPIIATPSI). Disordered regions lie at residues 103–144 (TPTP…QATR) and 178–247 (FQNR…FPPT). Polar residues predominate over residues 118–127 (QPLQSPSAPN). Residues 130-189 (SRRKRTTFSPEQATRLEAEYIGDSYMAREKRHLLAQSLKLSENQVKTWFQNRRAKDKRDR) constitute a DNA-binding region (homeobox). Residues 193-218 (NASNHTSNSRRSSPSRKSSSDSTPTP) show a composition bias toward low complexity. Residues 219 to 240 (TQATQFDMPTQIQTASPPTTAD) show a composition bias toward polar residues.

It is found in the nucleus. This Caenorhabditis elegans protein is Homeobox protein ceh-62.